Here is a 222-residue protein sequence, read N- to C-terminus: Countin-3 (222 aa).

The N-terminal stretch at 1–20 is a signal peptide; it reads MNKILSLFLITILLISKVMS. Residues 21-105 enclose the Saposin B-type domain; that stretch reads SSEECKLCTD…ESVKMCQYND (85 aa). Intrachain disulfides connect C25-C101, C28-C95, and C56-C68. Residues N108, N134, and N218 are each glycosylated (N-linked (GlcNAc...) asparagine).

Belongs to the countin family.

The protein localises to the secreted. Its function is as follows. May control the size of the multicellular structure. The protein is Countin-3 (ctnC) of Dictyostelium discoideum (Social amoeba).